The sequence spans 123 residues: uncharacterized protein (123 aa).

2 consecutive transmembrane segments (helical) span residues 1-21 and 103-123; these read MVLPLMFMYCKLAMLSLAVGC and LESSFFMTISLYMNISYILLF.

It is found in the membrane. This is an uncharacterized protein from Saccharomyces cerevisiae (strain ATCC 204508 / S288c) (Baker's yeast).